A 106-amino-acid polypeptide reads, in one-letter code: 3-phenylpropionate/cinnamic acid dioxygenase ferredoxin subunit (106 aa).

The region spanning 4–99 (IYACPVADVP…VHVEGSDIFI (96 aa)) is the Rieske domain. Residues Cys-42, His-44, Cys-62, and His-65 each contribute to the [2Fe-2S] cluster site.

This sequence belongs to the bacterial ring-hydroxylating dioxygenase ferredoxin component family. In terms of assembly, this dioxygenase system consists of four proteins: the two subunits of the hydroxylase component (HcaE and HcaF), a ferredoxin (HcaC) and a ferredoxin reductase (HcaD). It depends on [2Fe-2S] cluster as a cofactor.

It functions in the pathway aromatic compound metabolism; 3-phenylpropanoate degradation. Functionally, part of the multicomponent 3-phenylpropionate dioxygenase, that converts 3-phenylpropionic acid (PP) and cinnamic acid (CI) into 3-phenylpropionate-dihydrodiol (PP-dihydrodiol) and cinnamic acid-dihydrodiol (CI-dihydrodiol), respectively. This protein seems to be a 2Fe-2S ferredoxin. This Shigella boydii serotype 4 (strain Sb227) protein is 3-phenylpropionate/cinnamic acid dioxygenase ferredoxin subunit.